Reading from the N-terminus, the 275-residue chain is Large ribosomal subunit protein uL2 (275 aa).

A compositionally biased stretch (basic and acidic residues) spans 28-38; sequence RPYEPLVETKS. Disordered regions lie at residues 28–53 and 222–275; these read RPYEPLVETKSKSGGRNNVGRITTRH and GVAM…RSAK. The segment covering 254–275 has biased composition (basic residues); the sequence is KGHKTRKNKRTDKMIVRRRSAK.

This sequence belongs to the universal ribosomal protein uL2 family. Part of the 50S ribosomal subunit. Forms a bridge to the 30S subunit in the 70S ribosome.

In terms of biological role, one of the primary rRNA binding proteins. Required for association of the 30S and 50S subunits to form the 70S ribosome, for tRNA binding and peptide bond formation. It has been suggested to have peptidyltransferase activity; this is somewhat controversial. Makes several contacts with the 16S rRNA in the 70S ribosome. The polypeptide is Large ribosomal subunit protein uL2 (Marinobacter nauticus (strain ATCC 700491 / DSM 11845 / VT8) (Marinobacter aquaeolei)).